We begin with the raw amino-acid sequence, 860 residues long: Protein argonaute-3 (860 aa).

M1 carries the N-acetylmethionine modification. The PAZ domain occupies 230–349 (PVIQFMCEVL…LPLEVCNIVA (120 aa)). The 302-residue stretch at 518-819 (LIIVILPGKT…VAFRARYHLV (302 aa)) folds into the Piwi domain. Positions 530 to 567 (YAEVKRVGDTLLGMATQCVQVKNVIKTSPQTLSNLCLK) are interaction with guide RNA. The a divalent metal cation site is built by D598, E638, and D670. The segment at 758-805 (QGTSRPSHYHVLWDDNFFTADELQLLTYQLCHTYVRCTRSVSIPAPAY) is interaction with guide RNA. H808 contacts a divalent metal cation. S825 is subject to Phosphoserine.

Belongs to the argonaute family. Ago subfamily. Interacts with EIF4B, IMP8, PRMT5 and TNRC6B. Interacts with APOBEC3F, APOBEC3G and APOBEC3H. Interacts with EDC4. Ubiquitinated on surface-exposed lysines by a SCF-like E3 ubiquitin-protein ligase complex containing ZSWIM8 during target-directed microRNA degradation (TDMD), a process that mediates degradation of microRNAs (miRNAs). Ubiquitination by the SCF-like E3 ubiquitin-protein ligase complex containing ZSWIM8 leads to its subsequent degradation, thereby exposing miRNAs for degradation. ZSWIM8 recognizes and binds AGO3 when it is engaged with a TDMD target.

The protein resides in the cytoplasm. It localises to the P-body. It carries out the reaction Endonucleolytic cleavage to 5'-phosphomonoester.. Its function is as follows. Required for RNA-mediated gene silencing (RNAi). Binds to short RNAs such as microRNAs (miRNAs) and represses the translation of mRNAs which are complementary to them. Proposed to be involved in stabilization of small RNA derivates (siRNA) derived from processed RNA polymerase III-transcribed Alu repeats containing a DR2 retinoic acid response element (RARE) in stem cells and in the subsequent siRNA-dependent degradation of a subset of RNA polymerase II-transcribed coding mRNAs by recruiting a mRNA decapping complex involving EDC4. Possesses RNA slicer activity but only on select RNAs bearing 5'- and 3'-flanking sequences to the region of guide-target complementarity. In Mus musculus (Mouse), this protein is Protein argonaute-3 (Ago3).